Consider the following 341-residue polypeptide: Antihemorrhagic factor BJ46a (341 aa).

The first 19 residues, 1–19, serve as a signal peptide directing secretion; sequence MNSLVALVLLGQIIGSTLS. Cystatin fetuin-A-type domains are found at residues 22–130 and 141–254; these read VRGD…AKCH and RNCP…SDCV. The short motif at 23–25 is the Cell attachment site element; that stretch reads RGD. 6 disulfides stabilise this stretch: C28–C332, C85–C96, C110–C129, C143–C146, C205–C217, and C230–C253. N-linked (GlcNAc...) asparagine glycosylation occurs at N95. The N-linked (GlcNAc...) asparagine glycan is linked to N204. N-linked (GlcNAc...) asparagine glycans are attached at residues N282 and N293.

Homodimer. Expressed by the liver.

The protein localises to the secreted. Its function is as follows. Potent inhibitor of hemorrhagic activity but also proteolytic activities of atrolysin C and jararhagin. Inhibition occurs by formation of a non-covalent complex between BJ46a and the proteinases at their metalloproteinase domains. This is Antihemorrhagic factor BJ46a from Bothrops jararaca (Jararaca).